We begin with the raw amino-acid sequence, 404 residues long: Cysteine desulfurase IscS (404 aa).

Pyridoxal 5'-phosphate is bound by residues alanine 75 to threonine 76, asparagine 155, glutamine 183, and threonine 203 to histidine 205. Position 206 is an N6-(pyridoxal phosphate)lysine (lysine 206). Position 243 (threonine 243) interacts with pyridoxal 5'-phosphate. Catalysis depends on cysteine 328, which acts as the Cysteine persulfide intermediate. A [2Fe-2S] cluster-binding site is contributed by cysteine 328.

Belongs to the class-V pyridoxal-phosphate-dependent aminotransferase family. NifS/IscS subfamily. As to quaternary structure, homodimer. Forms a heterotetramer with IscU, interacts with other sulfur acceptors. Requires pyridoxal 5'-phosphate as cofactor.

The protein localises to the cytoplasm. It carries out the reaction (sulfur carrier)-H + L-cysteine = (sulfur carrier)-SH + L-alanine. Its pathway is cofactor biosynthesis; iron-sulfur cluster biosynthesis. In terms of biological role, master enzyme that delivers sulfur to a number of partners involved in Fe-S cluster assembly, tRNA modification or cofactor biosynthesis. Catalyzes the removal of elemental sulfur atoms from cysteine to produce alanine. Functions as a sulfur delivery protein for Fe-S cluster synthesis onto IscU, an Fe-S scaffold assembly protein, as well as other S acceptor proteins. This Photobacterium profundum (strain SS9) protein is Cysteine desulfurase IscS.